Consider the following 325-residue polypeptide: Elongation factor P--(R)-beta-lysine ligase (325 aa).

A substrate-binding site is contributed by 76-78 (SPE). ATP contacts are provided by residues 100 to 102 (RNE) and asparagine 109. Tyrosine 118 is a substrate binding site. 244–245 (EL) lines the ATP pocket. Residue glutamate 251 coordinates substrate. Glycine 300 provides a ligand contact to ATP.

This sequence belongs to the class-II aminoacyl-tRNA synthetase family. EpmA subfamily. As to quaternary structure, homodimer.

It carries out the reaction D-beta-lysine + L-lysyl-[protein] + ATP = N(6)-((3R)-3,6-diaminohexanoyl)-L-lysyl-[protein] + AMP + diphosphate + H(+). In terms of biological role, with EpmB is involved in the beta-lysylation step of the post-translational modification of translation elongation factor P (EF-P). Catalyzes the ATP-dependent activation of (R)-beta-lysine produced by EpmB, forming a lysyl-adenylate, from which the beta-lysyl moiety is then transferred to the epsilon-amino group of a conserved specific lysine residue in EF-P. In Erwinia tasmaniensis (strain DSM 17950 / CFBP 7177 / CIP 109463 / NCPPB 4357 / Et1/99), this protein is Elongation factor P--(R)-beta-lysine ligase.